The following is a 334-amino-acid chain: Phospho-N-acetylmuramoyl-pentapeptide-transferase (334 aa).

A run of 10 helical transmembrane segments spans residues 2 to 22, 55 to 75, 78 to 98, 116 to 136, 154 to 174, 187 to 207, 211 to 231, 236 to 256, 262 to 282, and 311 to 331; these read IPVLVAAGVAFLVTLVLGPVV, VIFLFGAAAAVLVVAFLPGGV, GWIEGLLVLAVALGFGVLGFM, EKLLGQVLIAVALAVTAVFVL, GLALDLGWWFFLGVTVFVVLA, GLAAGTFAVAALAFAMIALVM, WVGIVLGALVGGCVGFLCYNF, VFMGDTGSLALGGGLSAAAVI, FLLIIGGVFVIETLSVIIQVI, and VVLTFWTVGLVLAVLGLAGLK.

The protein belongs to the glycosyltransferase 4 family. MraY subfamily. Requires Mg(2+) as cofactor.

It is found in the cell membrane. It carries out the reaction UDP-N-acetyl-alpha-D-muramoyl-L-alanyl-gamma-D-glutamyl-meso-2,6-diaminopimeloyl-D-alanyl-D-alanine + di-trans,octa-cis-undecaprenyl phosphate = di-trans,octa-cis-undecaprenyl diphospho-N-acetyl-alpha-D-muramoyl-L-alanyl-D-glutamyl-meso-2,6-diaminopimeloyl-D-alanyl-D-alanine + UMP. It functions in the pathway cell wall biogenesis; peptidoglycan biosynthesis. Functionally, catalyzes the initial step of the lipid cycle reactions in the biosynthesis of the cell wall peptidoglycan: transfers peptidoglycan precursor phospho-MurNAc-pentapeptide from UDP-MurNAc-pentapeptide onto the lipid carrier undecaprenyl phosphate, yielding undecaprenyl-pyrophosphoryl-MurNAc-pentapeptide, known as lipid I. This Desulforudis audaxviator (strain MP104C) protein is Phospho-N-acetylmuramoyl-pentapeptide-transferase.